Consider the following 855-residue polypeptide: Serine/threonine-protein kinase HAL5 (855 aa).

Disordered stretches follow at residues 1 to 166 (MGDE…VERQ) and 214 to 261 (RRNS…GNGT). Phosphoserine occurs at positions 17 and 19. Polar residues predominate over residues 31–45 (ISGSNNAAAPSSRPG). The span at 57 to 74 (IITSNVSSPSISPVHSPV) shows a compositional bias: low complexity. Phosphoserine occurs at positions 68 and 72. A compositionally biased stretch (polar residues) spans 94–114 (LSPSREPSLNSENEMFSQESF). Residues 125–139 (LLEREDLQNKKEEKA) show a composition bias toward basic and acidic residues. Ser-160 carries the phosphoserine modification. The segment covering 248–258 (GMNSNATNNVG) has biased composition (low complexity). Phosphoserine occurs at positions 273, 277, 324, 333, 336, 358, 391, and 395. The tract at residues 319 to 347 (NKNVDSGDEKDADASVNSGDDGDNDSEAN) is disordered. Disordered regions lie at residues 401 to 427 (SQTV…DGKN) and 457 to 497 (LKSE…SHKP). Residues 462-474 (TKGNNGEGRSNSN) show a composition bias toward polar residues. In terms of domain architecture, Protein kinase spans 503 to 837 (GKYIGVVGAG…IEQLLQSSWM (335 aa)). ATP is bound by residues 509 to 517 (VGAGAYGVV) and Lys-546. Asp-688 (proton acceptor) is an active-site residue.

The protein belongs to the protein kinase superfamily. CAMK Ser/Thr protein kinase family. NPR/HAL subfamily. HAL5 sub-subfamily.

It catalyses the reaction L-seryl-[protein] + ATP = O-phospho-L-seryl-[protein] + ADP + H(+). It carries out the reaction L-threonyl-[protein] + ATP = O-phospho-L-threonyl-[protein] + ADP + H(+). In terms of biological role, protein kinase involved in salt tolerance and pH sensitivity, probably by regulating plasma membrane potential and cation influx. Positively controls the TRK1-TRK2 potassium transport system in response to potassium starvation. Stabilizes TRK1 in the plasma membrane by preventing its vacuolar sorting and degradation. Also stabilizes other plasma membrane nutrient transporters like CAN1, FUR4 and HXT1. May itself be subject to regulation by ARL1. This Saccharomyces cerevisiae (strain YJM789) (Baker's yeast) protein is Serine/threonine-protein kinase HAL5 (HAL5).